The chain runs to 831 residues: MVHETRSRTLAASQEEGKAAPKKQKTESKEQEGGQQAPSKNKKTADNEEHDGEQEPSKNKKLKAEESDLNGKATAVKEFSEFCKAIREHLTIEDMRKILQGNEQDASGSEDAVVPRCEDVMFYGPLDKCPVCGGQLECKGLKYNCTGTHSEWACCSFSTNNPSRRGGPIKVPDDVKNDFVRKWLKQQEGNKYPKRNLDDEGIFSGMMIALSGRMSRSHGYFKEQIMKHGGKVNNSVIGVTCVVASPAERHQGGSGGFAEALERGTPVVSENWIIDSVQKKEKQPLAAYDIASDVVPEGRGLPLGNLDPTEEAIETLAAELKLAGKRAVHKDSKLEKDGGHIYEKDGIIYNCAFSVCDLGGDINQLCIMQLIMVPENHLHLYYKKGPIGHDQMAEERVEDFGSRFNDAIKEFVRLFEEVTGNEFEPWEREKKFKKKCMKMYPLDMDDGVDVRHGGVALRQLGAAAAHCKLDPSVTFIMKQLCSQEIYRYALTEMGHDVPDLPIGMLTDLHLKRGEETLLEWKQDVESAPESGPAADAFWMEISNKWFTLFPTTRPYTMKGYEQIADNVASGLETVRDINVASRLIGDVFGSTLDDPLSQCYKKLGCSINRVVEDSEDYKMILKYLEKTYEPVKVGDVVYSATVERIYAVESSALPSYDEIKKLPNKVLLWCGTRSSNLLRHLRDGFVPAVCHIPVPGYMFGKAIVCSDAAAEAALYGFTAVDRPEGYLVLAVASLGKEIQEITGTPGSEDVKRMEEKKMGVKGVGRKTTDPSEHFTWRDGVTVPCGKLVPSTNKDGPLEYNEYAVYDPKQVSIAFLVGVKYEEQNMEVVPDE.

The tract at residues M1–L69 is disordered. 2 stretches are compositionally biased toward basic and acidic residues: residues E15–E32 and K43–E66. One can recognise a PADR1 zinc-binding domain in the interval E49–D199. The interval G124–P168 is zinc ribbon. Zn(2+)-binding residues include C129, C132, C145, and C155. A BRCT domain is found at E200–I290. A WGR domain is found at G338–M439. Positions H466 to G585 constitute a PARP alpha-helical domain. The PARP catalytic domain occupies D594–V827.

Belongs to the ARTD/PARP family.

It localises to the nucleus. It carries out the reaction L-aspartyl-[protein] + NAD(+) = 4-O-(ADP-D-ribosyl)-L-aspartyl-[protein] + nicotinamide. It catalyses the reaction L-glutamyl-[protein] + NAD(+) = 5-O-(ADP-D-ribosyl)-L-glutamyl-[protein] + nicotinamide. Involved in the base excision repair (BER) pathway, by catalyzing the poly(ADP-ribosyl)ation of a limited number of acceptor proteins involved in chromatin architecture and in DNA metabolism. This modification follows DNA damages and appears as an obligatory step in a detection/signaling pathway leading to the reparation of DNA strand breaks. The chain is Protein ADP-ribosyltransferase PARP3 (PARP3) from Oryza sativa subsp. japonica (Rice).